We begin with the raw amino-acid sequence, 506 residues long: Gallate 1-beta-glucosyltransferase 84A23 (506 aa).

The Proton acceptor role is filled by His-20. His-20 contacts an anthocyanidin. Residues Gln-345, His-360, Trp-363, Asn-364, Ser-365, and Glu-368 each contribute to the UDP-alpha-D-glucose site. Gly-383 lines the an anthocyanidin pocket. UDP-alpha-D-glucose is bound by residues Asp-384 and Gln-385.

This sequence belongs to the UDP-glycosyltransferase family. As to expression, expressed in roots of the seedlings.

The protein localises to the cytoplasm. The catalysed reaction is 3,4,5-trihydroxybenzoate + UDP-alpha-D-glucose = 1-O-galloyl-beta-D-glucose + UDP. It carries out the reaction 3,4-dihydroxybenzoate + UDP-alpha-D-glucose = 1-O-(3,4-dihydroxy-benzoyl)-beta-D-glucose + UDP. The enzyme catalyses 4-hydroxybenzoate + UDP-alpha-D-glucose = 4-(beta-D-glucosyloxy)benzoate + UDP + H(+). It catalyses the reaction (E)-cinnamate + UDP-alpha-D-glucose = 1-O-(trans-cinnamoyl)-beta-D-glucose + UDP. The catalysed reaction is (E)-sinapate + UDP-alpha-D-glucose = 1-O-(trans-sinapoyl)-beta-D-glucose + UDP. It carries out the reaction (E)-4-coumarate + UDP-alpha-D-glucose = 1-O-(trans-4-coumaroyl)-beta-D-glucose + UDP. The enzyme catalyses (E)-caffeate + UDP-alpha-D-glucose = 1-O-[(E)-caffeoyl]-beta-D-glucose + UDP. It catalyses the reaction (E)-ferulate + UDP-alpha-D-glucose = 1-O-[(E)-feruloyl]-beta-D-glucose + UDP. The catalysed reaction is genistein + UDP-alpha-D-glucose = genistein 7-O-beta-D-glucoside + UDP + H(+). It carries out the reaction apigenin + UDP-alpha-D-glucose = apigenin 7-O-beta-D-glucoside + UDP + H(+). The enzyme catalyses luteolin + UDP-alpha-D-glucose = luteolin 7-O-beta-D-glucoside + UDP + H(+). Its function is as follows. Glucosyltransferase that catalyzes the formation of 1-O-beta-D-glucose esters with hydroxybenzoic acids and cinnamic acid including its derivatives as preferred glucosyl acceptors. Has significant activity with gallic acid (3,4,5-trihydroxybenzoic acid), 3,4-dihydroxybenzoic acid, 4-hydroxybenzoic acid, cinnamic acid, sinapic acid, coumaric acid, caffeic acid and ferulic acid in vitro. Gallic acid is the predicted native substrate of the enzyme, which thus catalyzes the formation of 1-O-galloyl-beta-D-glucose, the first committed step of hydrolyzable tannins (HTs) biosynthesis, with punicalagin isomers being the major HTs of pomegranate. Catalyzes the formation of flavonoid glucosides with genistein, apigenin and luteolin in vitro. Has low activity with benzoic acid, 2-hydroxybenzoic acid, 3-hydroxybenzoic acid, 2,4-dihydroxybenzoic acid, naringenin and quercetin. No activity with catechol, resveratrol, chlorogenic acid, catechin and epicatechin (building blocks of proanthocyanidins) or cyanidin, delphinidin and pelargonidin (the three anthocyanidins). This is Gallate 1-beta-glucosyltransferase 84A23 from Punica granatum (Pomegranate).